The following is a 184-amino-acid chain: ATP synthase subunit delta (184 aa).

Belongs to the ATPase delta chain family. As to quaternary structure, F-type ATPases have 2 components, F(1) - the catalytic core - and F(0) - the membrane proton channel. F(1) has five subunits: alpha(3), beta(3), gamma(1), delta(1), epsilon(1). F(0) has three main subunits: a(1), b(2) and c(10-14). The alpha and beta chains form an alternating ring which encloses part of the gamma chain. F(1) is attached to F(0) by a central stalk formed by the gamma and epsilon chains, while a peripheral stalk is formed by the delta and b chains.

Its subcellular location is the cell membrane. Its function is as follows. F(1)F(0) ATP synthase produces ATP from ADP in the presence of a proton or sodium gradient. F-type ATPases consist of two structural domains, F(1) containing the extramembraneous catalytic core and F(0) containing the membrane proton channel, linked together by a central stalk and a peripheral stalk. During catalysis, ATP synthesis in the catalytic domain of F(1) is coupled via a rotary mechanism of the central stalk subunits to proton translocation. Functionally, this protein is part of the stalk that links CF(0) to CF(1). It either transmits conformational changes from CF(0) to CF(1) or is implicated in proton conduction. The protein is ATP synthase subunit delta of Bacillus licheniformis (strain ATCC 14580 / DSM 13 / JCM 2505 / CCUG 7422 / NBRC 12200 / NCIMB 9375 / NCTC 10341 / NRRL NRS-1264 / Gibson 46).